The primary structure comprises 94 residues: Cell division topological specificity factor (94 aa).

It belongs to the MinE family.

In terms of biological role, prevents the cell division inhibition by proteins MinC and MinD at internal division sites while permitting inhibition at polar sites. This ensures cell division at the proper site by restricting the formation of a division septum at the midpoint of the long axis of the cell. This Synechococcus sp. (strain CC9311) protein is Cell division topological specificity factor.